The sequence spans 579 residues: Salivary alpha-glucosidase (579 aa).

The first 18 residues, 1-18, serve as a signal peptide directing secretion; sequence MKIFVPLLSFLLAGLTTG. Positions 37, 39, 41, 43, 45, and 118 each coordinate Ca(2+). Residues N118 and N151 are each glycosylated (N-linked (GlcNAc...) asparagine). D189 is a Ca(2+) binding site. Catalysis depends on D219, which acts as the Nucleophile. Ca(2+)-binding residues include Y223, L224, and E226. N282 is a glycosylation site (N-linked (GlcNAc...) asparagine). E290 serves as the catalytic Proton donor. 3 N-linked (GlcNAc...) asparagine glycosylation sites follow: N304, N325, and N401. N325 is an N-acetyl-beta-D-glucosamine binding site.

Belongs to the glycosyl hydrolase 13 family. Saliva (at protein level). Proximal lateral lobes of the salivary gland (at protein level).

Its subcellular location is the secreted. It carries out the reaction Hydrolysis of terminal, non-reducing (1-&gt;4)-linked alpha-D-glucose residues with release of alpha-D-glucose.. In terms of biological role, functions as a glucosidase that shows high activity toward sucrose, a major component of nectar. Assists the mosquito in its sugar-feeding capabilities. This Aedes aegypti (Yellowfever mosquito) protein is Salivary alpha-glucosidase.